Here is a 422-residue protein sequence, read N- to C-terminus: Imidazolonepropionase (422 aa).

The Fe(3+) site is built by His82 and His84. Residues His82 and His84 each coordinate Zn(2+). The 4-imidazolone-5-propanoate site is built by Arg91, Tyr154, and His187. Tyr154 is a binding site for N-formimidoyl-L-glutamate. Residue His252 coordinates Fe(3+). His252 is a Zn(2+) binding site. Residue Glu255 coordinates 4-imidazolone-5-propanoate. A Fe(3+)-binding site is contributed by Asp327. Asp327 provides a ligand contact to Zn(2+). N-formimidoyl-L-glutamate contacts are provided by Asn329 and Gly331. Residue Ser332 participates in 4-imidazolone-5-propanoate binding.

The protein belongs to the metallo-dependent hydrolases superfamily. HutI family. Zn(2+) is required as a cofactor. Requires Fe(3+) as cofactor.

Its subcellular location is the cytoplasm. The catalysed reaction is 4-imidazolone-5-propanoate + H2O = N-formimidoyl-L-glutamate. Its pathway is amino-acid degradation; L-histidine degradation into L-glutamate; N-formimidoyl-L-glutamate from L-histidine: step 3/3. Its function is as follows. Catalyzes the hydrolytic cleavage of the carbon-nitrogen bond in imidazolone-5-propanoate to yield N-formimidoyl-L-glutamate. It is the third step in the universal histidine degradation pathway. In Alkaliphilus oremlandii (strain OhILAs) (Clostridium oremlandii (strain OhILAs)), this protein is Imidazolonepropionase.